Here is a 292-residue protein sequence, read N- to C-terminus: 33 kDa chaperonin (292 aa).

2 cysteine pairs are disulfide-bonded: cysteine 230–cysteine 232 and cysteine 263–cysteine 266.

This sequence belongs to the HSP33 family. Under oxidizing conditions two disulfide bonds are formed involving the reactive cysteines. Under reducing conditions zinc is bound to the reactive cysteines and the protein is inactive.

The protein localises to the cytoplasm. Functionally, redox regulated molecular chaperone. Protects both thermally unfolding and oxidatively damaged proteins from irreversible aggregation. Plays an important role in the bacterial defense system toward oxidative stress. This Escherichia coli O7:K1 (strain IAI39 / ExPEC) protein is 33 kDa chaperonin.